The sequence spans 1989 residues: MATADTPAPASSGLSPKEEGELEDGEISDDDNNSQIRSRSSSSSSGGGLLPYPRRRPPHSARGGGSGGGGGSSSSSSSSQQQLRNFSRSRHASERGHLRGPSSYRPKEPFRSHPPSVRMPSSSLSESSPRPSFWERSHLALDRFRFRGRPYRGGSRWSRGRGVGERGGKPGCRPPLGGGAGSGFSSSQSWREPSPPRKSSKSFGRSPSRKQNYSSKNENCVEETFEDLLLKYKQIQLELECINKDEKLALSSKEENVQEDPKTLNFEDQTSTDNVSITKDSSKEVAPEEKTQVKTFQAFELKPLRQKLTLPGDKNRLKKVKDGAKPLSLKSDTTDSSQGLQDKEQNLTRRISTSDILSEKKLGEDEEELSELQLRLLALQSASKKWQQKEQQVMKESKEKLTKTKTVQQKVKTSTKTHSAKKVSTTAKQALRKQQTKAWKKLQQQKEQERQKEEDQRKQAEEEERRKREEEIRKIRDLSNQEEQYNRFMKLVGGKRRSRSKSSDPDLRRSLDKQPTDSGGGIYQYDNYEEVAMDTDSETSSPAPSPVQPPFFSECSLGYFSPAPSLSLPPPPQVSSLPPLSQPYVEGLCVSLEPLPPLPPLPPLPPEDPEQPPKPPFADEEEEEEMLLREELLKSLANKRAFKPEETSSNSDPPSPPVLNNSHPVPRSNLSIVSINTVSQPRIQNPKFHRGPRLPRTVISLPKHKSVVVTLNDSDDSESDGEASKSTNSVFGGLESMIKEARRTAEQASKPKVPPKSEKENDPLRTPEALPEEKKIEYRLLKEEIANREKQRLIKSDQLKTSSSSPANSDVEIDGIGRIAMVTKQVTDAESKLKKHRILLMKDESVLKNLVQQEAKKKESVRNAEAKITKLTEQLQATEKILNVNRMFLKKLQEQIHRVQQRVTIKKALTLKYGEELARAKAVASKEIGKRKLEQDRFGPNKMMRLDSSPVSSPRKHSAELIAMEKRRLQKLEYEYALKIQKLKEARALKAKEQQNISPVVEEEPEFSLPQPSLHDLTQDKLTLDTEENDVDDEILSGSSRERRRSFLESNYFTKPNLKHTDTANKECINKLNKNTVEKPELFLGLKIGELQKLYSKADSLKQLILKTTTGITEKVLHGQEISVDVDFVTAQSKTMEVKPCPFRPYHSPLLVFKSYRFSPYYRTKEKLPLSSVSYSNMIEPDQCFCRFDLTGTCNDDDCQWQHIQDYTLSRKQLFQDILSYNLSLIGCAETSTNEEITASAEKYVEKLFGVNKDRMSMDQMAVLLVSNINESKGHTPPFTTYKDKRKWKPKFWRKPISDNSFSSDEEQSTGPIKYAFQPENQINVPALDTVVTPDDVRYFTNETDDIANLEASVLENPSHVQLWLKLAYKYLNQNEGECSESLDSALNVLARALENNKDNPEIWCHYLRLFSKRGTKDEVQEMCETAVEYAPDYQSFWTFLHLESTFEEKDYVCERMLEFLMGAAKQETSNILSFQLLEALLFRVQLHIFTGRCQSALAILQNALKSANDGIVAEYLKTSDRCLAWLAYIHLIEFNILPSKFYDPSNDNPSRIVNTESFVMPWQAVQDVKTNPDMLLAVFEDAVKACTDESLAVEERIEACLPLYTNMIALHQLLERYEAAMELCKSLLESCPINCQLLEALVALYLQTNQHDKARAVWLTAFEKNPQNAEVFYHMCKFFILQNRGDNLLPFLRKFIASFFKPGFEKYNNLDLFRYLLNIPGPIDIPSRLCKGNFDDDMFNHQVPYLWLIYCLCHPLQSSIKETVEAYEAALGVAMRCDIVQKIWMDYLVFANNRAAGSRNKVQEFKFFTDLVNRCLVTVPARYPIPFSSADYWSNYEFHNRVIFFYLSCVPKTQHSKTLERFCSVMPANSGLALRLLQHEWEESNVQILKLQAKMFTYNIPTCLATWKIAIAAEIVLKGQREVHRLYQRALQKLPLCASLWKDQLLFEASEGGKTDNLRKLVSKCQEIGVSLNELLNLNSNKTESKNH.

Disordered regions lie at residues 1-133, 148-218, 251-290, and 310-365; these read MATA…RPSF, GRPY…SKNE, SSKE…PEEK, and LPGD…LGED. A2 carries the N-acetylalanine modification. Phosphoserine is present on residues S15, S28, and S34. The segment covering 20–32 has biased composition (acidic residues); it reads GELEDGEISDDDN. Residues 33–44 are compositionally biased toward low complexity; that stretch reads NSQIRSRSSSSS. The segment covering 62–72 has biased composition (gly residues); the sequence is RGGGSGGGGGS. Composition is skewed to low complexity over residues 114-132, 183-192, and 201-210; these read PPSV…PRPS, GFSSSQSWRE, and KSFGRSPSRK. S128 carries the phosphoserine modification. Residues 219 to 259 are a coiled coil; the sequence is NCVEETFEDLLLKYKQIQLELECINKDEKLALSSKEENVQE. Residue S251 is modified to Phosphoserine. A compositionally biased stretch (basic and acidic residues) spans 251–262; it reads SSKEENVQEDPK. The segment covering 266-279 has biased composition (polar residues); that stretch reads FEDQTSTDNVSITK. A compositionally biased stretch (basic and acidic residues) spans 280-290; sequence DSSKEVAPEEK. Positions 330–340 are enriched in polar residues; sequence KSDTTDSSQGL. A phosphoserine mark is found at S352 and S383. Positions 358–389 form a coiled coil; it reads SEKKLGEDEEELSELQLRLLALQSASKKWQQK. Disordered regions lie at residues 385–671 and 711–770; these read KWQQ…SNLS and LNDS…PEAL. The span at 392 to 402 shows a compositional bias: basic and acidic residues; the sequence is QVMKESKEKLT. Over residues 430 to 440 the composition is skewed to basic residues; the sequence is ALRKQQTKAWK. Residues 432–487 are a coiled coil; sequence RKQQTKAWKKLQQQKEQERQKEEDQRKQAEEEERRKREEEIRKIRDLSNQEEQYNR. Basic and acidic residues-rich tracts occupy residues 444–479 and 501–515; these read QQKE…RDLS and KSSD…DKQP. Positions 527–537 are enriched in acidic residues; that stretch reads NYEEVAMDTDS. Over residues 574 to 583 the composition is skewed to low complexity; the sequence is VSSLPPLSQP. Residues 594–616 are compositionally biased toward pro residues; sequence PLPPLPPLPPLPPEDPEQPPKPP. The segment covering 647–671 has biased composition (polar residues); that stretch reads TSSNSDPPSPPVLNNSHPVPRSNLS. A phosphoserine mark is found at S662, S714, S717, and S719. Residues 755 to 770 show a composition bias toward basic and acidic residues; sequence PKSEKENDPLRTPEAL. T766 is subject to Phosphothreonine. Residues S805 and S809 each carry the phosphoserine modification. The stretch at 847–909 forms a coiled coil; the sequence is LKNLVQQEAK…QQRVTIKKAL (63 aa). Residues S948, S949, and S953 each carry the phosphoserine modification. Positions 965-989 form a coiled coil; that stretch reads EKRRLQKLEYEYALKIQKLKEARAL. Phosphoserine is present on residues S998 and S1046. A C3H1-type zinc finger spans residues 1185-1206; sequence FCRFDLTGTCNDDDCQWQHIQD. A phosphoserine mark is found at S1301, S1303, and S1304. 7 TPR repeats span residues 1361 to 1400, 1401 to 1434, 1438 to 1471, 1478 to 1511, 1602 to 1635, 1636 to 1669, and 1745 to 1778; these read VQLW…NKDN, PEIW…APDY, WTFL…ETSN, LEAL…ANDG, LPLY…CPIN, CQLL…NPQN, and PYLW…AMRC.

Component of the poly(A) tail exosome targeting (PAXT) complex made of accessory factors, such as PABPN1, ZFC3H1 and MTREX, and which directs a subset of long and polyadenylated poly(A) RNAs for exosomal degradation. Co-localizes with component of the CBC-ARS2 (CBCA) complex. Binds to RNA exosome components. Interacts with NCBP1/CBP80, ZC3H18, MTREX and PABPN1 in a RNase-insensitive manner, and with PABPC4, PABPC1 and ZC3H14 in a RNase-sensitive manner.

It localises to the nucleus. Functionally, subunit of the trimeric poly(A) tail exosome targeting (PAXT) complex, a complex that directs a subset of long and polyadenylated poly(A) RNAs for exosomal degradation. The RNA exosome is fundamental for the degradation of RNA in eukaryotic nuclei. Substrate targeting is facilitated by its cofactor MTREX, which links to RNA-binding protein adapters. This Homo sapiens (Human) protein is Zinc finger C3H1 domain-containing protein (ZFC3H1).